The primary structure comprises 640 residues: 1-deoxy-D-xylulose-5-phosphate synthase (640 aa).

Residues H79 and 120 to 122 each bind thiamine diphosphate; that span reads AHS. Residue D151 participates in Mg(2+) binding. Residues 152-153, N180, Y289, and E371 each bind thiamine diphosphate; that span reads GA. N180 provides a ligand contact to Mg(2+).

It belongs to the transketolase family. DXPS subfamily. Homodimer. Requires Mg(2+) as cofactor. Thiamine diphosphate is required as a cofactor.

The catalysed reaction is D-glyceraldehyde 3-phosphate + pyruvate + H(+) = 1-deoxy-D-xylulose 5-phosphate + CO2. Its pathway is metabolic intermediate biosynthesis; 1-deoxy-D-xylulose 5-phosphate biosynthesis; 1-deoxy-D-xylulose 5-phosphate from D-glyceraldehyde 3-phosphate and pyruvate: step 1/1. Functionally, catalyzes the acyloin condensation reaction between C atoms 2 and 3 of pyruvate and glyceraldehyde 3-phosphate to yield 1-deoxy-D-xylulose-5-phosphate (DXP). The sequence is that of 1-deoxy-D-xylulose-5-phosphate synthase from Erythrobacter litoralis (strain HTCC2594).